The primary structure comprises 30 residues: uncharacterized protein (30 aa).

A disordered region spans residues 1–30 (MHLSTLPNVPWPNRSFTTKRPPLPNMSFSW).

This is an uncharacterized protein from Saccharomyces cerevisiae (strain ATCC 204508 / S288c) (Baker's yeast).